The chain runs to 85 residues: Colicin E3 immunity protein (85 aa).

The protein belongs to the cloacin immunity protein family. In terms of assembly, native colicin E3 is a 1:1 complex of A chain and protein B (Im3). Binds between the translocation and cytotoxic RNase domains of intact ColE3, blocking access to the 16S rRNA substrate. Forms a very tight 1:1 complex with the cytotoxic fragment (residues 456-551) of ColE3 (ceaC).

In terms of biological role, the cognate immunity protein for colicin E3 (ColE3), protects cells which harbor the plasmid ColE3 against the toxic action of ColE3. This protein inhibits the 16S RNA hydrolyzing activity of ColE3 by binding with very high affinity to the C-terminal catalytic domain of ColE3. In Escherichia coli, this protein is Colicin E3 immunity protein.